The following is a 405-amino-acid chain: Acetate kinase (405 aa).

Residue Asn10 participates in Mg(2+) binding. Lys17 provides a ligand contact to ATP. Residue Arg93 coordinates substrate. Asp150 acts as the Proton donor/acceptor in catalysis. ATP-binding positions include 210-214, 284-286, and 332-336; these read HLGNG, DMR, and GVGEN. Glu386 is a Mg(2+) binding site.

This sequence belongs to the acetokinase family. As to quaternary structure, homodimer. Requires Mg(2+) as cofactor. Mn(2+) serves as cofactor.

It localises to the cytoplasm. It carries out the reaction acetate + ATP = acetyl phosphate + ADP. The protein operates within metabolic intermediate biosynthesis; acetyl-CoA biosynthesis; acetyl-CoA from acetate: step 1/2. Its function is as follows. Catalyzes the formation of acetyl phosphate from acetate and ATP. Can also catalyze the reverse reaction. This is Acetate kinase from Streptomyces avermitilis (strain ATCC 31267 / DSM 46492 / JCM 5070 / NBRC 14893 / NCIMB 12804 / NRRL 8165 / MA-4680).